Consider the following 384-residue polypeptide: Beta-glucuronosyltransferase GlcAT14C (384 aa).

At 1 to 11 the chain is on the cytoplasmic side; that stretch reads MKRSHISSPRS. A signal-anchor for type II membrane protein membrane pass occupies residues 12–34; that stretch reads YSRPAISIFGVFLLFLLVLTLSS. The Lumenal segment spans residues 35-384; it reads RKPSDSSSGL…HENFRAKQCK (350 aa). Asn156, Asn285, and Asn306 each carry an N-linked (GlcNAc...) asparagine glycan.

The protein belongs to the glycosyltransferase 14 family.

The protein resides in the golgi apparatus membrane. In terms of biological role, beta-glucuronosyltransferase involved in the biosynthesis of type II arabinogalactan (AG). Modifies both the beta-1,6-linked galactan and beta-1,3-linked galactan present in type II AG. The sequence is that of Beta-glucuronosyltransferase GlcAT14C from Arabidopsis thaliana (Mouse-ear cress).